Reading from the N-terminus, the 858-residue chain is Phosphoenolpyruvate carboxylase (858 aa).

Catalysis depends on residues H145 and K531.

The protein belongs to the PEPCase type 1 family. The cofactor is Mg(2+).

It carries out the reaction oxaloacetate + phosphate = phosphoenolpyruvate + hydrogencarbonate. Forms oxaloacetate, a four-carbon dicarboxylic acid source for the tricarboxylic acid cycle. The polypeptide is Phosphoenolpyruvate carboxylase (Thermus thermophilus (strain ATCC BAA-163 / DSM 7039 / HB27)).